A 367-amino-acid chain; its full sequence is Dual specificity protein phosphatase 1 (367 aa).

Residues R20–S137 enclose the Rhodanese domain. The Tyrosine-protein phosphatase domain maps to G173–A314. The Phosphocysteine intermediate role is filled by C258. 2 positions are modified to phosphoserine; by MAPK1 and MAPK3: S359 and S364.

This sequence belongs to the protein-tyrosine phosphatase family. Non-receptor class dual specificity subfamily. Phosphorylation at Ser-359 and Ser-364 by MAPK1/ERK2 and MAPK3/ERK1 reduces its rate of degradation. In terms of processing, 'Lys-48'-linked polyubiquitinated by NEURL3, leading to proteasomal degradation. As to expression, expressed at high levels in the lung, liver placenta and pancreas. Moderate levels seen in the heart and skeletal muscle. Lower levels found in the brain and kidney.

It localises to the nucleus. It catalyses the reaction O-phospho-L-tyrosyl-[protein] + H2O = L-tyrosyl-[protein] + phosphate. It carries out the reaction O-phospho-L-seryl-[protein] + H2O = L-seryl-[protein] + phosphate. The catalysed reaction is O-phospho-L-threonyl-[protein] + H2O = L-threonyl-[protein] + phosphate. Dual specificity phosphatase that dephosphorylates MAP kinase MAPK1/ERK2 on both 'Thr-183' and 'Tyr-185', regulating its activity during the meiotic cell cycle. The chain is Dual specificity protein phosphatase 1 from Homo sapiens (Human).